The chain runs to 274 residues: MAIHLYKTSTPSTRNGAVDSQVKSNPRNNLIYGQHHCGKGRNARGIITVRHRGGGHKRLYRKIDFRRNAKDIYGRIVTIEYDPNRNAYICLIHYGDGEKRYILHPRGAIIGDTIVSGTEVPIKMGNALPLTDMPLGTAIHNIEITLGKGGQLARAAGAVAKLIAKEGKSATLKLPSGEVRLISKNCSATVGQVGNVGVNQKSLGRAGSKCWLGKRPVVRGVVMNPVDHPHGGGEGRAPIGRKKPVTPWGYPALGRRTRKRKKYSETLILRRRSK.

Disordered regions lie at residues 1 to 22 (MAIH…DSQV) and 225 to 274 (PVDH…RRSK).

The protein belongs to the universal ribosomal protein uL2 family. As to quaternary structure, part of the 50S ribosomal subunit.

Its subcellular location is the plastid. It is found in the chloroplast. The protein is Large ribosomal subunit protein uL2cz/uL2cy (rpl2-A) of Arabis hirsuta (Hairy rock-cress).